The following is a 361-amino-acid chain: Chorismate synthase (361 aa).

Arg48 is a binding site for NADP(+). Residues 126 to 128, Gly286, 301 to 305, and Arg328 each bind FMN; these read RFS and KPTPS.

The protein belongs to the chorismate synthase family. FMNH2 serves as cofactor.

The catalysed reaction is 5-O-(1-carboxyvinyl)-3-phosphoshikimate = chorismate + phosphate. It functions in the pathway metabolic intermediate biosynthesis; chorismate biosynthesis; chorismate from D-erythrose 4-phosphate and phosphoenolpyruvate: step 7/7. Functionally, catalyzes the anti-1,4-elimination of the C-3 phosphate and the C-6 proR hydrogen from 5-enolpyruvylshikimate-3-phosphate (EPSP) to yield chorismate, which is the branch point compound that serves as the starting substrate for the three terminal pathways of aromatic amino acid biosynthesis. This reaction introduces a second double bond into the aromatic ring system. This Korarchaeum cryptofilum (strain OPF8) protein is Chorismate synthase.